Reading from the N-terminus, the 109-residue chain is ATPase inhibitor, mitochondrial (109 aa).

The N-terminal 25 residues, 1 to 25 (MAATALAARTRQAVWSVWAMQGRGF), are a transit peptide targeting the mitochondrion. Residues 26–52 (GSESGDNVRSSAGAVRDAGGAFGKREQ) form a disordered region. Positions 26-52 (GSESGDNVRSSAGAVRDAGGAFGKREQ) are N-terminal inhibitory region. Residues 69–109 (ALKKHHENEISHHAKEIERLQKEIERHKQSIKKLKQSEDDD) are a coiled coil. The tract at residues 74-106 (HENEISHHAKEIERLQKEIERHKQSIKKLKQSE) is antiparallel alpha-helical coiled coil region. An N6-succinyllysine modification is found at Lys103.

The protein belongs to the ATPase inhibitor family. As to quaternary structure, homodimer; represents the active form and is present at a pH value below 6.5. Homotetramer; represents the inactive form and is present at a pH value above 7.0.

The protein resides in the mitochondrion. Functionally, endogenous F(1)F(o)-ATPase inhibitor limiting ATP depletion when the mitochondrial membrane potential falls below a threshold and the F(1)F(o)-ATP synthase starts hydrolyzing ATP to pump protons out of the mitochondrial matrix. Required to avoid the consumption of cellular ATP when the F(1)F(o)-ATP synthase enzyme acts as an ATP hydrolase. Indirectly acts as a regulator of heme synthesis in erythroid tissues: regulates heme synthesis by modulating the mitochondrial pH and redox potential, allowing FECH to efficiently catalyze the incorporation of iron into protoporphyrin IX to produce heme. This Bos taurus (Bovine) protein is ATPase inhibitor, mitochondrial.